The chain runs to 305 residues: tRNA pseudouridine synthase B (305 aa).

The Nucleophile role is filled by D38.

It belongs to the pseudouridine synthase TruB family. Type 1 subfamily.

It catalyses the reaction uridine(55) in tRNA = pseudouridine(55) in tRNA. In terms of biological role, responsible for synthesis of pseudouridine from uracil-55 in the psi GC loop of transfer RNAs. The polypeptide is tRNA pseudouridine synthase B (Latilactobacillus sakei subsp. sakei (strain 23K) (Lactobacillus sakei subsp. sakei)).